We begin with the raw amino-acid sequence, 62 residues long: uncharacterized protein (62 aa).

This is an uncharacterized protein from Invertebrate iridescent virus 6 (IIV-6).